Here is a 123-residue protein sequence, read N- to C-terminus: Class II hydrophobin 2 (123 aa).

The N-terminal stretch at 1–16 (MRSFLVIATLAVGAFG) is a signal peptide. 4 disulfides stabilise this stretch: Cys22–Cys70, Cys32–Cys61, Cys33–Cys45, and Cys71–Cys82.

It belongs to the cerato-ulmin hydrophobin family. In terms of assembly, homodimer. Homodimers further self-assemble to form highly ordered films at water-air interfaces through intermolecular interactions.

It is found in the secreted. Its subcellular location is the cell wall. Functionally, aerial growth, conidiation, and dispersal of filamentous fungi in the environment rely upon a capability of their secreting small amphipathic proteins called hydrophobins (HPBs) with low sequence identity. Class I can self-assemble into an outermost layer of rodlet bundles on aerial cell surfaces, conferring cellular hydrophobicity that supports fungal growth, development and dispersal; whereas Class II form highly ordered films at water-air interfaces through intermolecular interactions but contribute nothing to the rodlet structure. Hyd2 is a class II hydrophobin that plays probably a role in intraspecific signaling or hyphal fusion. Not necessary for root adhesion and colonization. Might play an essential role since no deletion mutants could be obtained. This chain is Class II hydrophobin 2, found in Bionectria ochroleuca (Gliocladium roseum).